The primary structure comprises 84 residues: Acyl carrier protein (84 aa).

The 75-residue stretch at 1–75 (MIFQKIQEFI…DILEYIQQHV (75 aa)) folds into the Carrier domain. Ser35 is modified (O-(pantetheine 4'-phosphoryl)serine).

This sequence belongs to the acyl carrier protein (ACP) family. Post-translationally, 4'-phosphopantetheine is transferred from CoA to a specific serine of apo-ACP by AcpS. This modification is essential for activity because fatty acids are bound in thioester linkage to the sulfhydryl of the prosthetic group.

It is found in the cytoplasm. Its pathway is lipid metabolism; fatty acid biosynthesis. Carrier of the growing fatty acid chain in fatty acid biosynthesis. The chain is Acyl carrier protein from Phytoplasma mali (strain AT).